A 549-amino-acid polypeptide reads, in one-letter code: MKRVLTALAATLPFAANAADAISGAVERQPTNWQAIIMFLIFVVFTLGITYWASKRVRSRNDYYTAGGNITGFQNGLAIAGDYMSAASFLGISALVFTSGYDGLIYSLGFLVGWPIILFLIAERLRNLGRYTFADVASYRLKQGPIRILSACGSLVVVALYLIAQMVGAGKLIELLFGLNYHIAVVLVGVLMMMYVLFGGMLATTWVQIIKAVLLLFGASFMAFMVMKHVGFSFNNLFSEAMAVHPKGVDIMKPGGLVKDPISALSLGLGLMFGTAGLPHILMRFFTVSDAREARKSVFYATGFMGYFYILTFIIGFGAIMLVGANPEYKDAAGHLIGGNNMAAVHLANAVGGNLFLGFISAVAFATILAVVAGLTLAGASAVSHDLYANVFKKGATEREELRVSKITVLILGVIAIILGVLFENQNIAFMVGLAFAIAASCNFPIILLSMYWSKLTTRGAMLGGWLGLITAVVLMILGPTIWVQILGHEKAIFPYEYPALFSISVAFLGIWFFSATDNSAEGARERELFRAQFIRSQTGFGVEQGRAH.

Helical transmembrane passes span 33–53 (WQAI…TYWA), 77–97 (LAIA…ALVF), 103–123 (GLIY…LIAE), 148–168 (ILSA…QMVG), 183–203 (IAVV…GMLA), 206–226 (WVQI…AFMV), 262–282 (ISAL…PHIL), 303–323 (GFMG…IMLV), 355–375 (LFLG…VAGL), 404–424 (VSKI…VLFE), 428–448 (IAFM…PIIL), 464–484 (GGWL…TIWV), and 493–513 (IFPY…GIWF).

Belongs to the sodium:solute symporter (SSF) (TC 2.A.21) family.

The protein resides in the cell inner membrane. Its function is as follows. Transports acetate. The protein is Cation/acetate symporter ActP of Escherichia coli O6:K15:H31 (strain 536 / UPEC).